A 1120-amino-acid chain; its full sequence is Phosphatidylinositide phosphatase SAC2 (1120 aa).

In terms of domain architecture, SAC spans 167 to 518 (YKIFMDSDSF…GDTISRQYAG (352 aa)). Residues 593–760 (RGAQEQVSLL…RHSKPHEDIM (168 aa)) enclose the hSac2 domain. Disordered stretches follow at residues 837-881 (SSLE…SREN) and 979-1008 (PAPK…LPRP). Basic and acidic residues predominate over residues 851-860 (LKDHGPHSEE). Composition is skewed to polar residues over residues 864–879 (DSDS…SGSR) and 998–1007 (SSHSQNQLPR).

The protein resides in the membrane. The protein localises to the clathrin-coated pit. It is found in the early endosome. It localises to the recycling endosome. It catalyses the reaction a myo-inositol phosphate + H2O = myo-inositol + phosphate. In terms of biological role, inositol 4-phosphatase which mainly acts on phosphatidylinositol 4-phosphate. May be functionally linked to OCRL, which converts phosphatidylinositol 4,5-bisphosphate to phosphatidylinositol, for a sequential dephosphorylation of phosphatidylinositol 4,5-bisphosphate at the 5 and 4 position of inositol, thus playing an important role in the endocytic recycling. The polypeptide is Phosphatidylinositide phosphatase SAC2 (Danio rerio (Zebrafish)).